Reading from the N-terminus, the 1151-residue chain is MDLASFQNLLQQCQTEQDTQKRKEVEDFYFKYKQEEPASYVANIIEVICSNSSSSNYAAILFRRDMEQSGDVAAVYRAGNGNPECVHEVMVRILNTMLGQTSSNSIRFLSEILGVHLERILESDPQGGVAQFPEFFQALETHFAAPTTTSQLRVGFLNCIKYICGLAYTSVTKIGGKAIIDLIFAGLEDQADTVAVAAIKCVNALILYGDSDDEDEKNDSVIPNSVLQQFVYKIIQRLPAMIGRHNFMDAEQALEQLVDIADMNGAVLKPMVKDVHILVTGILSPPEIDDSLKRLTIVLFSYLCENISDIRKRAKKAISEIISQFIFPYCGLFDDTLTQAWLTSEDPHHFDDQNSLLGYAESALDRISTTLGYKVIFPLIKDFVSYAKANPTVHNCFAVANIFTITAEGLARLVTKEDIVFTIDTLLELSNHPHQRVRYSVLSAIGQLSEDYAPTFQTFHEKVMPLLTKMAQDPCIAVAAHSLGALVNFLEHLKKAETYLYKDALEPVITMHLMQSNHLLSNTNSLALVASLSNTLLKNDFADMCKNYIPHILGMFTNVMETLRKSPNMSLNKPRLSYISRILECLSIVAGTLPQLFAPHIDPLLTAIMELFNFSIDDAESSLLKYTLIAVSRIVDIYPETFPKYMDPIIAKLNDIFNLKYIEFDNVNEFAVTDDDDCSFTISPHVLQLQAVGFDVISGIMRKTPAAFAPHLDAFLTKIQDRSFHTGSISESLKLNSIECICTAFRVAVAAPTVASPPAVHQRAFTMLIAATESNIDDIDIYQSIADSMAEYVMDYCKYITSTKDMTSYTETVNKVFSLLENFEDQCRKLLEVSIQDLECDDDLDPEETATMVSDTVDDFSDAIATFADVYGTFAEALGDLSLDFMSPLLMPVIKRWVNYYTSTKKNGISGAQVAFLTSAVSILADIVKYLSPANSKSLVEPFVTIIIENTKLNKEWVEINQVCCYTAGLLFEKYEGDPGLAILIPTLLANATELIGVVKSGELVSKEALAAYDNAVTLSARMAQAFPTELGNMSGGLTQFWASWLDLASTVQTDREEVIASIQLIISAFARNDPNFMSGNLVHALYAFLSLYFGDHHISIVEDQTNANLIEGANTVLTQIAGHGTILADTIAKCSEYVQKTYSLYTSVRQ.

HEAT repeat units follow at residues 1–36 (MDLA…KQEE), 37–82 (PASY…GNGN), 83–132 (PECV…VAQF), 133–175 (PEFF…TKIG), 176–222 (GKAI…DSVI), 223–269 (PNSV…AVLK), 270–316 (PMVK…RAKK), 317–377 (AISE…KVIF), 378–416 (PLIK…LVTK), 417–453 (EDIV…EDYA), 454–495 (PTFQ…HLKK), 496–540 (AETY…LKND), 541–593 (FADM…AGTL), 594–642 (PQLF…PETF), 643–704 (PKYM…MRKT), 705–756 (PAAF…TVAS), 757–811 (PPAV…SYTE), 812–880 (TVNK…ALGD), 881–932 (LSLD…KYLS), 933–978 (PANS…YEGD), 979–1027 (PGLA…AQAF), 1028–1074 (PTEL…ARND), 1075–1120 (PNFM…VLTQ), and 1121–1151 (IAGH…SVRQ).

It belongs to the importin beta family.

The protein resides in the nucleus intermembrane space. The protein localises to the cytoplasm. It localises to the nucleus. Functionally, functions in nuclear protein import as nuclear transport receptor. Involved in encystation process. Constitutive expression enhances cyst production and increases transcription of endogenous genes involved in encystation. Level of mRNA of the transcriptional factor myb1-like protein increases in early stages of the encystation process followed by increased mRNAs of the cyst wall proteins cwp1-3. This is Importin beta from Giardia intestinalis (strain ATCC 50803 / WB clone C6) (Giardia lamblia).